The chain runs to 216 residues: FMN-dependent NADH:quinone oxidoreductase 3 (216 aa).

Residues serine 10 and 16-18 (SAS) each bind FMN.

Belongs to the azoreductase type 1 family. In terms of assembly, homodimer. FMN serves as cofactor.

The catalysed reaction is 2 a quinone + NADH + H(+) = 2 a 1,4-benzosemiquinone + NAD(+). The enzyme catalyses N,N-dimethyl-1,4-phenylenediamine + anthranilate + 2 NAD(+) = 2-(4-dimethylaminophenyl)diazenylbenzoate + 2 NADH + 2 H(+). Functionally, quinone reductase that provides resistance to thiol-specific stress caused by electrophilic quinones. Also exhibits azoreductase activity. Catalyzes the reductive cleavage of the azo bond in aromatic azo compounds to the corresponding amines. The protein is FMN-dependent NADH:quinone oxidoreductase 3 of Pseudomonas fluorescens (strain ATCC BAA-477 / NRRL B-23932 / Pf-5).